Reading from the N-terminus, the 217-residue chain is Tegument protein BKRF4 (217 aa).

The disordered stretch occupies residues Met-1–Leu-217. The segment covering Tyr-32–Ile-42 has biased composition (polar residues). Residues Gln-43–Asp-79 are compositionally biased toward acidic residues. Residues Asp-63 to Leu-64 form an interaction with host histones H3/H4 region. The tract at residues Asp-81–Trp-84 is interaction with host H2A/H2B. Acidic residues predominate over residues Ser-89–Ala-102. Positions Ser-106–Arg-132 are enriched in low complexity. Positions Arg-136–Ala-145 are enriched in pro residues. Residues Gly-208 to Leu-217 show a composition bias toward polar residues.

The protein belongs to the lymphocryptovirus BKRF4 family. In terms of assembly, forms a complex with the host H3/H4 dimer and histone chaperone ASF1. Also forms a complex with host H2A/H2B dimer. Interacts (via C-terminus) with BGLF2; this interaction is important for infectious virion production.

It localises to the virion tegument. The protein resides in the host nucleus. The protein localises to the host cytoplasm. It is found in the host perinuclear region. Histone-binding protein that binds to histones H2A/H2B, H3/H4 and cellular chromatin to overcome the host DNA damage response triggered by the viral genome ends. Interferes with histone ubiquitination and recruitment of repair proteins. The protein is Tegument protein BKRF4 of Epstein-Barr virus (strain AG876) (HHV-4).